Reading from the N-terminus, the 558-residue chain is Vanin-like protein 1 (558 aa).

Positions 1–22 (MSNTWWWLSVVLLILGLMPGMS) are cleaved as a signal peptide. The region spanning 33 to 299 (YTAGVVEFKQ…RAIYVAQVPK (267 aa)) is the CN hydrolase domain. N-linked (GlcNAc...) asparagine glycosylation is present at N65. The Proton acceptor role is filled by E76. N-linked (GlcNAc...) asparagine glycans are attached at residues N103, N120, and N128. K171 acts as the Proton donor in catalysis. A glycan (N-linked (GlcNAc...) asparagine) is linked at N180. Residue C203 is the Nucleophile of the active site. 2 N-linked (GlcNAc...) asparagine glycosylation sites follow: N354 and N379. S531 carries the GPI-anchor amidated serine lipid modification. The propeptide at 532–558 (GSPGLRILGGWLAMPLIILAIARTMSS) is removed in mature form.

This sequence belongs to the carbon-nitrogen hydrolase superfamily. BTD/VNN family. As to expression, expressed in larvae and early pupae. Expressed in third instar larvae.

The protein localises to the cell membrane. The polypeptide is Vanin-like protein 1 (Drosophila melanogaster (Fruit fly)).